The chain runs to 278 residues: Tumor necrosis factor ligand superfamily member 6 (278 aa).

Residues 1–77 (MQQPVNYPCP…SPLKKKDNIE (77 aa)) are Cytoplasmic-facing. The tract at residues 26–68 (PGSVFSCPSSGPRGPGQRRPPPPPPPPSPLPPPSQPPPLPPLS) is disordered. Residues 33–42 (PSSGPRGPGQ) show a composition bias toward low complexity. Pro residues predominate over residues 43–68 (RRPPPPPPPPSPLPPPSQPPPLPPLS). Residues 78–99 (LWLPVIFFMVLVALVGMGLGMY) form a helical; Signal-anchor for type II membrane protein membrane-spanning segment. Residues 100–278 (QLFHLQKELA…SKTFFGLYKL (179 aa)) lie on the Extracellular side of the membrane. Asparagine 116 carries an N-linked (GlcNAc...) asparagine glycan. Residues 125-135 (EKQIANPSTPS) show a composition bias toward polar residues. The interval 125–147 (EKQIANPSTPSETKKPRSVAHLT) is disordered. The THD domain maps to 142–278 (SVAHLTGNPR…SKTFFGLYKL (137 aa)). An intrachain disulfide couples cysteine 199 to cysteine 230. Asparagine 247 and asparagine 257 each carry an N-linked (GlcNAc...) asparagine glycan.

This sequence belongs to the tumor necrosis factor family. In terms of assembly, homotrimer. Interacts with ARHGAP9, BAIAP2L1, BTK, CACNB3, CACNB4, CRK, DLG2, DNMBP, DOCK4, EPS8L3, FGR, FYB1, FYN, HCK, ITK, ITSN2, KALRN, LYN, MACC1, MIA, MPP4, MYO15A, NCF1, NCK1, NCK2, NCKIPSD, OSTF1, PIK3R1, PSTPIP1, RIMBP3C, SAMSN1, SH3GL3, SH3PXD2B, SH3PXD2A, SH3RF2, SKAP2, SNX33, SNX9, SORBS3, SPTA1, SRC, SRGAP1, SRGAP2, SRGAP3, TEC, TJP3 and YES1. Post-translationally, the soluble form derives from the membrane form by proteolytic processing. The membrane-bound form undergoes two successive intramembrane proteolytic cleavages. The first one is processed by ADAM10 producing an N-terminal fragment, which lacks the receptor-binding extracellular domain. This ADAM10-processed FasL (FasL APL) remnant form is still membrane anchored and further processed by SPPL2A that liberates the FasL intracellular domain (FasL ICD). FasL shedding by ADAM10 is a prerequisite for subsequent intramembrane cleavage by SPPL2A in T-cells. In terms of processing, phosphorylated by FGR on tyrosine residues; this is required for ubiquitination and subsequent internalization. N-glycosylated. Post-translationally, monoubiquitinated. As to expression, expressed in activated splenocytes and thymocytes. Moderate or weak expression found in small intestines, kidney and lung.

It localises to the cell membrane. It is found in the cytoplasmic vesicle lumen. The protein localises to the lysosome lumen. Its subcellular location is the secreted. The protein resides in the nucleus. In terms of biological role, cytokine that binds to TNFRSF6/FAS, a receptor that transduces the apoptotic signal into cells. Involved in cytotoxic T-cell-mediated apoptosis, natural killer cell-mediated apoptosis and in T-cell development. Initiates fratricidal/suicidal activation-induced cell death (AICD) in antigen-activated T-cells contributing to the termination of immune responses. TNFRSF6/FAS-mediated apoptosis also has a role in the induction of peripheral tolerance. Binds to TNFRSF6B/DcR3, a decoy receptor that blocks apoptosis. Its function is as follows. Induces FAS-mediated activation of NF-kappa-B, initiating non-apoptotic signaling pathways. Can induce apoptosis but does not appear to be essential for this process. Cytoplasmic form induces gene transcription inhibition. The protein is Tumor necrosis factor ligand superfamily member 6 (Faslg) of Rattus norvegicus (Rat).